We begin with the raw amino-acid sequence, 430 residues long: MSSVVVVGSQWGDEGKGKITDFLSQNAEVIARYQGGDNAGHTIAFDGKTYKLRLIPSGIFYSDKISVIGNGVVLNPKSLVTELKYLHDNGVSTDNLRISNRAHVILPYHIVLDGLQEAAKKDNKIGTTNKGIGPAYMDKAARVGIRVADLLEKDTFEEKLRTNLEEKNRLFEKMYGHEPLKFEDIFEEYYEYGQELKDYVTDTSVILNDALDSGKRVLFEGAQGVMLDIDQGTYPFVTSSNPVAGGVTIGSGVGPAKIDKVVGACKAYTSRVGDGPFPTELHDEIGDHIREVGHEYGTVTKRPRRIGWFDSVVMRHSKRVSGLTNLCLNCVDVLTGLDEIKICTAYELNGEKIYHYPASLKELSACKPVYETLPGWKEDITNCKTLEDLPENARNYIHRIQDLVGVKVSTFSVGPDREQTNVLDNVWAHI.

GTP is bound by residues 12–18 and 40–42; these read GDEGKGK and GHT. D13 functions as the Proton acceptor in the catalytic mechanism. The Mg(2+) site is built by D13 and G40. IMP-binding positions include 13–16, 38–41, T128, R142, Q223, T238, and R302; these read DEGK and NAGH. H41 functions as the Proton donor in the catalytic mechanism. 298 to 304 serves as a coordination point for substrate; it reads TVTKRPR. GTP contacts are provided by residues R304, 330–332, and 412–414; these read CVD and SVG.

Belongs to the adenylosuccinate synthetase family. Homodimer. Mg(2+) is required as a cofactor.

It localises to the cytoplasm. The catalysed reaction is IMP + L-aspartate + GTP = N(6)-(1,2-dicarboxyethyl)-AMP + GDP + phosphate + 2 H(+). Its pathway is purine metabolism; AMP biosynthesis via de novo pathway; AMP from IMP: step 1/2. Its function is as follows. Plays an important role in the de novo pathway of purine nucleotide biosynthesis. Catalyzes the first committed step in the biosynthesis of AMP from IMP. The sequence is that of Adenylosuccinate synthetase from Ligilactobacillus salivarius (strain UCC118) (Lactobacillus salivarius).